We begin with the raw amino-acid sequence, 461 residues long: D-phenylhydantoinase (461 aa).

Residues His59, His61, and Lys151 each coordinate a divalent metal cation. The residue at position 151 (Lys151) is an N6-carboxylysine. Tyr156 is a substrate binding site. A divalent metal cation-binding residues include His182 and His239. Position 286 (Ser286) interacts with substrate. Asp313 is an a divalent metal cation binding site. Residue Asn335 participates in substrate binding.

This sequence belongs to the metallo-dependent hydrolases superfamily. Hydantoinase/dihydropyrimidinase family. In terms of assembly, homotetramer. Requires a divalent metal cation as cofactor. Post-translationally, carboxylation allows a single lysine to coordinate two divalent metal cations.

It carries out the reaction D-5-phenylhydantoin + H2O = N-carbamoyl-D-phenylglycine + H(+). Catalyzes the stereospecific hydrolysis of the cyclic amide bond of D-hydantoin derivatives with an aromatic side chains at the 5'-position. Has no activity on dihydropyrimidines. The physiological function is unknown. The chain is D-phenylhydantoinase from Escherichia coli (strain SE11).